Here is a 306-residue protein sequence, read N- to C-terminus: Ornithine carbamoyltransferase (306 aa).

Carbamoyl phosphate-binding positions include 53–56 (STRT), Q80, R104, and 131–134 (HPCQ). Residues N162, D219, and 223–224 (SM) contribute to the L-ornithine site. Residues 259 to 260 (CL) and R287 contribute to the carbamoyl phosphate site.

Belongs to the aspartate/ornithine carbamoyltransferase superfamily. OTCase family.

The protein resides in the cytoplasm. It carries out the reaction carbamoyl phosphate + L-ornithine = L-citrulline + phosphate + H(+). It functions in the pathway amino-acid biosynthesis; L-arginine biosynthesis; L-arginine from L-ornithine and carbamoyl phosphate: step 1/3. Reversibly catalyzes the transfer of the carbamoyl group from carbamoyl phosphate (CP) to the N(epsilon) atom of ornithine (ORN) to produce L-citrulline. The sequence is that of Ornithine carbamoyltransferase from Pseudomonas syringae pv. tomato (strain ATCC BAA-871 / DC3000).